The sequence spans 300 residues: MKIDLSRLVTESRNPASTEIDTLSTIEMLQVINEEDQKVALAVKAVLPQIAKTVNAITAAFANGGRLVYMGAGTSGRLGILDASECPPTYGTHPDMVIGLIAGGHQAILKAVENAEDDVKMGQDDLKALHLTKHDVVVGIAASGRTPYVLGGLEYAKSIGATTASIACNPECAMAKAADIAILPIVGAEVVTGSSRMKAGTAQKLVLNMLTTGAMIRSGKVFGNLMVDVEATNAKLIQRQTNIVVEATGASKEEAERALNACDRHCKTAILMILADLDAEQAKSRLAAHNGFIRAALNNN.

The SIS domain maps to 57–220 (ITAAFANGGR…TTGAMIRSGK (164 aa)). Glu-85 functions as the Proton donor in the catalytic mechanism. Glu-116 is a catalytic residue.

This sequence belongs to the GCKR-like family. MurNAc-6-P etherase subfamily. As to quaternary structure, homodimer.

The catalysed reaction is N-acetyl-D-muramate 6-phosphate + H2O = N-acetyl-D-glucosamine 6-phosphate + (R)-lactate. It participates in amino-sugar metabolism; 1,6-anhydro-N-acetylmuramate degradation. The protein operates within amino-sugar metabolism; N-acetylmuramate degradation. Its pathway is cell wall biogenesis; peptidoglycan recycling. Functionally, specifically catalyzes the cleavage of the D-lactyl ether substituent of MurNAc 6-phosphate, producing GlcNAc 6-phosphate and D-lactate. Together with AnmK, is also required for the utilization of anhydro-N-acetylmuramic acid (anhMurNAc) either imported from the medium or derived from its own cell wall murein, and thus plays a role in cell wall recycling. The protein is N-acetylmuramic acid 6-phosphate etherase 2 of Vibrio parahaemolyticus serotype O3:K6 (strain RIMD 2210633).